Consider the following 588-residue polypeptide: Adenine deaminase (588 aa).

It belongs to the metallo-dependent hydrolases superfamily. Adenine deaminase family. As to quaternary structure, homodimer. Requires Mn(2+) as cofactor.

It carries out the reaction adenine + H2O + H(+) = hypoxanthine + NH4(+). This Escherichia coli (strain 55989 / EAEC) protein is Adenine deaminase.